The sequence spans 161 residues: Lipoprotein signal peptidase (161 aa).

Transmembrane regions (helical) follow at residues 11–31, 44–64, 66–86, and 100–120; these read PLFW…KLWV, LWSG…FSAF, GGAG…IIFA, and GCIL…GHVI. Catalysis depends on residues Asp121 and Asp137. The helical transmembrane segment at 135–155 threads the bilayer; sequence LADVSINIGIAALLWASFFPV.

The protein belongs to the peptidase A8 family.

The protein localises to the cell inner membrane. It carries out the reaction Release of signal peptides from bacterial membrane prolipoproteins. Hydrolyzes -Xaa-Yaa-Zaa-|-(S,diacylglyceryl)Cys-, in which Xaa is hydrophobic (preferably Leu), and Yaa (Ala or Ser) and Zaa (Gly or Ala) have small, neutral side chains.. The protein operates within protein modification; lipoprotein biosynthesis (signal peptide cleavage). Its function is as follows. This protein specifically catalyzes the removal of signal peptides from prolipoproteins. The chain is Lipoprotein signal peptidase from Synechocystis sp. (strain ATCC 27184 / PCC 6803 / Kazusa).